Consider the following 201-residue polypeptide: Adenylyl-sulfate kinase (201 aa).

ATP is bound at residue 35–42 (GLSGSGKS). The active-site Phosphoserine intermediate is serine 109.

Belongs to the APS kinase family.

The enzyme catalyses adenosine 5'-phosphosulfate + ATP = 3'-phosphoadenylyl sulfate + ADP + H(+). The protein operates within sulfur metabolism; hydrogen sulfide biosynthesis; sulfite from sulfate: step 2/3. Its function is as follows. Catalyzes the synthesis of activated sulfate. In Erwinia tasmaniensis (strain DSM 17950 / CFBP 7177 / CIP 109463 / NCPPB 4357 / Et1/99), this protein is Adenylyl-sulfate kinase.